The sequence spans 347 residues: NHL repeat-containing protein 3 (347 aa).

A signal peptide spans 1-22 (MARAWVCLAGAAFFLSCLVLHS). The NHL 1 repeat unit spans residues 47–93 (RLDLGWPKNSEYFTGATFCVAVDSLNGLVYVAQRGDNIPKVLVFSED). N101 is a glycosylation site (N-linked (GlcNAc...) asparagine). NHL repeat units follow at residues 150 to 196 (TPGK…LSQD) and 200 to 243 (LWLR…FDKD). Residues N206 and N278 are each glycosylated (N-linked (GlcNAc...) asparagine). The NHL 4 repeat unit spans residues 294–338 (GDCSVVSTIQLADQVLPHLLEVDRKTGAVYVAEIGAKQIQKYIPW).

This chain is NHL repeat-containing protein 3 (Nhlrc3), found in Mus musculus (Mouse).